The chain runs to 654 residues: C6 finger domain transcription factor nscR (654 aa).

Residues 17–43 (CELCRERKVKCDKLDPCTNCSSAGVIC) constitute a DNA-binding region (zn(2)-C6 fungal-type).

It is found in the nucleus. Transcription factor that specifically regulates the neosartoricin B biosynthesis gene cluster. The chain is C6 finger domain transcription factor nscR from Trichophyton verrucosum (strain HKI 0517).